The following is a 297-amino-acid chain: Quinate/shikimate dehydrogenase (297 aa).

Positions 80 and 116 each coordinate substrate. Residues 141–144 (AGGA), 164–167 (NRRD), lysine 214, 241–244 (CVYN), and glycine 264 contribute to the NAD(+) site.

Belongs to the shikimate dehydrogenase family. As to quaternary structure, homodimer.

It carries out the reaction L-quinate + NAD(+) = 3-dehydroquinate + NADH + H(+). The catalysed reaction is L-quinate + NADP(+) = 3-dehydroquinate + NADPH + H(+). It catalyses the reaction shikimate + NADP(+) = 3-dehydroshikimate + NADPH + H(+). The enzyme catalyses shikimate + NAD(+) = 3-dehydroshikimate + NADH + H(+). It participates in metabolic intermediate biosynthesis; chorismate biosynthesis; chorismate from D-erythrose 4-phosphate and phosphoenolpyruvate: step 4/7. Its function is as follows. The actual biological function of YdiB remains unclear, nor is it known whether 3-dehydroshikimate or quinate represents the natural substrate. Catalyzes the reversible NAD-dependent reduction of both 3-dehydroshikimate (DHSA) and 3-dehydroquinate to yield shikimate (SA) and quinate, respectively. It can use both NAD or NADP for catalysis, however it has higher catalytic efficiency with NAD. The polypeptide is Quinate/shikimate dehydrogenase (Shigella dysenteriae serotype 1 (strain Sd197)).